Reading from the N-terminus, the 470-residue chain is FAD-dependent monooxygenase SAT7 (470 aa).

The helical transmembrane segment at 28-48 (GLSVAIVGGGIVGIALALGLV) threads the bilayer. Residues Glu58, Ala71, and Arg143 each coordinate FAD. Residues Arg227 and Tyr260 contribute to the active site. 2 residues coordinate FAD: Asp351 and Ala364.

Belongs to the paxM FAD-dependent monooxygenase family. Requires FAD as cofactor.

Its subcellular location is the membrane. It functions in the pathway mycotoxin biosynthesis. In terms of biological role, FAD-dependent monooxygenase; part of the satratoxin SC1 cluster involved in the biosynthesis of satratoxins, trichothecene mycotoxins that are associated with human food poisonings. Satratoxins are suggested to be made by products of multiple gene clusters (SC1, SC2 and SC3) that encode 21 proteins in all, including polyketide synthases, acetyltransferases, and other enzymes expected to modify the trichothecene skeleton. SC1 encodes 10 proteins, SAT1 to SAT10. The largest are SAT8, which encodes a putative polyketide synthase (PKS) with a conventional non-reducing architecture, and SAT10, a putative protein containing four ankyrin repeats and thus may be involved in protein scaffolding. The putative short-chain reductase SAT3 may assist the PKS in some capacity. SAT6 contains a secretory lipase domain and acts probably as a trichothecene esterase. SAT5 encodes a putative acetyltransferase, and so, with SAT6, may affect endogenous protection from toxicity. The probable transcription factor SAT9 may regulate the expression of the SC1 cluster. SC2 encodes proteins SAT11 to SAT16, the largest of which encodes the putative reducing PKS SAT13. SAT11 is a cytochrome P450 monooxygenase, while SAT14 and SAT16 are probable acetyltransferases. The SC2 cluster may be regulated by the transcription factor SAT15. SC3 is a small cluster that encodes 5 proteins, SAT17 to SAT21. SAT21 is a putative MFS-type transporter which may have a role in exporting secondary metabolites. The four other proteins putatively encoded in SC3 include the taurine hydroxylase-like protein SAT17, the O-methyltransferase SAT18, the acetyltransferase SAT19, and the Cys6-type zinc finger SAT20, the latter being probably involved in regulation of SC3 expression. The sequence is that of FAD-dependent monooxygenase SAT7 from Stachybotrys chartarum (strain CBS 109288 / IBT 7711) (Toxic black mold).